We begin with the raw amino-acid sequence, 944 residues long: Serine/threonine-protein kinase PLK4 (944 aa).

One can recognise a Protein kinase domain in the interval 12–265; it reads FKVLNLLGKG…LSSVLDHAFM (254 aa). Residues 18 to 26 and Lys41 each bind ATP; that span reads LGKGSFACV. The active-site Proton acceptor is the Asp136. Disordered stretches follow at residues 327–396, 432–463, and 530–561; these read KDKH…YSER, RSLE…RSND, and LGIK…QQAF. Polar residues predominate over residues 378–394; the sequence is RSGTSQSQTYAKPSSYS. Over residues 432–447 the composition is skewed to basic and acidic residues; that stretch reads RSLERHTSPPVKEKTP. The span at 548–561 shows a compositional bias: polar residues; it reads FGEQSKSRVPQQAF. Residues 565–678 form the Cryptic POLO box 1 (CPB1) domain; sequence TLRSIISPLN…AKFIKLVRSK (114 aa). Residues 679–791 enclose the Cryptic POLO box 2 (CPB2) domain; sequence TPKVTYYTRY…GRRPALAESP (113 aa). The segment at 786–809 is disordered; the sequence is ALAESPKTQPTPSVDSARERKEEQ. Residues 862-940 form the POLO box domain; sequence QVLKSVFVEN…LSSILMLFAS (79 aa).

The protein belongs to the protein kinase superfamily. Ser/Thr protein kinase family. CDC5/Polo subfamily. In terms of assembly, homodimer. In terms of processing, ubiquitinated; leading to its degradation by the proteasome.

Its subcellular location is the cytoplasm. It is found in the cytoskeleton. The protein localises to the microtubule organizing center. The protein resides in the centrosome. It localises to the centriole. The enzyme catalyses L-seryl-[protein] + ATP = O-phospho-L-seryl-[protein] + ADP + H(+). It catalyses the reaction L-threonyl-[protein] + ATP = O-phospho-L-threonyl-[protein] + ADP + H(+). Serine/threonine-protein kinase that plays a central role in centriole duplication. Able to trigger procentriole formation on the surface of the parental centriole cylinder, leading to the recruitment of centriole biogenesis proteins such as sass6, cpap, ccp110, cep135 and gamma-tubulin. When overexpressed, it is able to induce centrosome amplification through the simultaneous generation of multiple procentrioles adjoining each parental centriole during S phase. Its central role in centriole replication suggests a possible role in tumorigenesis, centrosome aberrations being frequently observed in tumors. Also involved in deuterosome-mediated centriole amplification in multiciliated that can generate more than 100 centrioles. In Xenopus laevis (African clawed frog), this protein is Serine/threonine-protein kinase PLK4.